Reading from the N-terminus, the 78-residue chain is MPKRILQGTVVSDKNDKTVVVRVERRFAHPILQKTVRRSKKYKAHDESNQFKVGDLVSIEECAPISKDKRWTVVSAQS.

The protein belongs to the universal ribosomal protein uS17 family. In terms of assembly, part of the 30S ribosomal subunit.

In terms of biological role, one of the primary rRNA binding proteins, it binds specifically to the 5'-end of 16S ribosomal RNA. The protein is Small ribosomal subunit protein uS17 of Sinorhizobium medicae (strain WSM419) (Ensifer medicae).